We begin with the raw amino-acid sequence, 412 residues long: MHCYLLSVFLTLDLAAVALSLSTCSTLDMDQFMRKRIEAIRGQILSKLKLTSPPDEYPEPEEVPPEVISIYNSTRDLLQEKANHRAATCERERSDEEYYAKEVYKIDMQPFYPENAIPPSYYSLYFRIVRFDVSAMEKNASNLVKAEFRVFRLQNSKARVSEQRIELYQVLKSKELSSPGQRYIDSKVVKTRAEGEWLSFDVTEAVHEWLHHRDRNLGFKISLHCPCCTFVPSNNYIIPNKSEEPEARFAGIDDYTYSSGDVKALKSNRKKYSGKTPHLLLMLLPSYRLESQQPSRRKKRALDAAYCFRNVQDNCCLRPLYIDFKRDLGWKWIHEPKGYHANFCAGACPYLWSSDTQHSRVLSLYNTINPEASASPCCVSQDLEPLTILYYIGKTPKIEQLSNMIVKSCKCS.

Residues 1-20 (MHCYLLSVFLTLDLAAVALS) form the signal peptide. 3 N-linked (GlcNAc...) asparagine glycosylation sites follow: N72, N139, and N240. 4 disulfides stabilise this stretch: C307-C316, C315-C378, C344-C409, and C348-C411.

This sequence belongs to the TGF-beta family. As to quaternary structure, interacts with Transforming growth factor beta-2 (TGF-beta-2) chain; interaction is non-covalent and maintains (TGF-beta-2) in a latent state. In terms of assembly, homodimer; disulfide-linked. Interacts with TGF-beta receptors (TGFBR1 and TGFBR2), leading to signal transduction. In terms of processing, the precursor proprotein is cleaved in the Golgi apparatus to form Transforming growth factor beta-2 (TGF-beta-2) and Latency-associated peptide (LAP) chains, which remain non-covalently linked, rendering TGF-beta-2 inactive.

The protein localises to the secreted. It is found in the extracellular space. Its subcellular location is the extracellular matrix. Functionally, precursor of the Latency-associated peptide (LAP) and Transforming growth factor beta-2 (TGF-beta-2) chains, which constitute the regulatory and active subunit of TGF-beta-2, respectively. Its function is as follows. Required to maintain the Transforming growth factor beta-2 (TGF-beta-2) chain in a latent state during storage in extracellular matrix. Associates non-covalently with TGF-beta-2 and regulates its activation via interaction with 'milieu molecules', such as LTBP1 and LRRC32/GARP, that control activation of TGF-beta-2. In terms of biological role, multifunctional protein that regulates various processes such as angiogenesis and heart development. Activation into mature form follows different steps: following cleavage of the proprotein in the Golgi apparatus, Latency-associated peptide (LAP) and Transforming growth factor beta-2 (TGF-beta-2) chains remain non-covalently linked rendering TGF-beta-2 inactive during storage in extracellular matrix. At the same time, LAP chain interacts with 'milieu molecules', such as LTBP1 and LRRC32/GARP, that control activation of TGF-beta-2 and maintain it in a latent state during storage in extracellular milieus. Once activated following release of LAP, TGF-beta-2 acts by binding to TGF-beta receptors (TGFBR1 and TGFBR2), which transduce signal. The sequence is that of Transforming growth factor beta-2 proprotein (TGFB2) from Gallus gallus (Chicken).